The chain runs to 120 residues: Putative ankyrin repeat protein RBE_1215 (120 aa).

ANK repeat units follow at residues 22 to 52 and 59 to 88; these read DGGN…LTNI and FGDT…ITSV.

The sequence is that of Putative ankyrin repeat protein RBE_1215 from Rickettsia bellii (strain RML369-C).